A 534-amino-acid polypeptide reads, in one-letter code: Blue-light-activated protein (534 aa).

Residues 20–93 (GKDIFFAAVE…QSIRDAIDQR (74 aa)) form the PAS domain. An S-4a-FMN cysteine modification is found at cysteine 70. The PAC domain maps to 94 to 148 (VDISTEILNYRKDGSSFWNALFISPVYNDAGELIYFFASQLDISRRRDAEEALRQ). The Histidine kinase domain maps to 161 to 390 (GIAHDFNNLL…TLRLYFPVDE (230 aa)). Histidine 164 is modified (phosphohistidine; by autocatalysis). A Response regulatory domain is found at 411–527 (RILIVEDRPD…DLARKVRQVL (117 aa)). Residue aspartate 461 is modified to 4-aspartylphosphate.

In terms of processing, FMN binds covalently to cysteine after exposure to blue light and this bond is spontaneously broken in the dark.

It catalyses the reaction ATP + protein L-histidine = ADP + protein N-phospho-L-histidine.. Photosensitive kinase and response regulator that is involved in increased bacterial virulence upon exposure to light. This chain is Blue-light-activated protein, found in Pseudomonas syringae pv. syringae (strain B728a).